We begin with the raw amino-acid sequence, 391 residues long: Chaperone protein DnaJ (391 aa).

Residues 2–67 (DYYDVLGVSK…QKRESYDRYG (66 aa)) enclose the J domain. Residues 148–226 (GVKKELLVSG…CRGQGRIKDK (79 aa)) form a CR-type zinc finger. Residues cysteine 161, cysteine 164, cysteine 178, cysteine 181, cysteine 200, cysteine 203, cysteine 214, and cysteine 217 each coordinate Zn(2+). 4 CXXCXGXG motif repeats span residues 161 to 168 (CETCSGSG), 178 to 185 (CDRCKGSG), 200 to 207 (CPECGGEG), and 214 to 221 (CSSCRGQG).

Belongs to the DnaJ family. As to quaternary structure, homodimer. Requires Zn(2+) as cofactor.

The protein resides in the cytoplasm. In terms of biological role, participates actively in the response to hyperosmotic and heat shock by preventing the aggregation of stress-denatured proteins and by disaggregating proteins, also in an autonomous, DnaK-independent fashion. Unfolded proteins bind initially to DnaJ; upon interaction with the DnaJ-bound protein, DnaK hydrolyzes its bound ATP, resulting in the formation of a stable complex. GrpE releases ADP from DnaK; ATP binding to DnaK triggers the release of the substrate protein, thus completing the reaction cycle. Several rounds of ATP-dependent interactions between DnaJ, DnaK and GrpE are required for fully efficient folding. Also involved, together with DnaK and GrpE, in the DNA replication of plasmids through activation of initiation proteins. The protein is Chaperone protein DnaJ of Chlamydia abortus (strain DSM 27085 / S26/3) (Chlamydophila abortus).